The following is a 510-amino-acid chain: 2,3-bisphosphoglycerate-independent phosphoglycerate mutase (510 aa).

Mn(2+) is bound by residues Asp14 and Ser64. The active-site Phosphoserine intermediate is Ser64. Substrate contacts are provided by residues His125, 155 to 156 (RD), Arg187, Arg193, 259 to 262 (RADR), and Lys332. Residues Asp399, His403, Asp440, His441, and His459 each contribute to the Mn(2+) site.

This sequence belongs to the BPG-independent phosphoglycerate mutase family. As to quaternary structure, monomer. The cofactor is Mn(2+).

The enzyme catalyses (2R)-2-phosphoglycerate = (2R)-3-phosphoglycerate. The protein operates within carbohydrate degradation; glycolysis; pyruvate from D-glyceraldehyde 3-phosphate: step 3/5. Catalyzes the interconversion of 2-phosphoglycerate and 3-phosphoglycerate. Essential for the growth and pathogenicity on the host plant. This Pseudomonas syringae pv. tomato (strain ATCC BAA-871 / DC3000) protein is 2,3-bisphosphoglycerate-independent phosphoglycerate mutase.